Reading from the N-terminus, the 697-residue chain is uncharacterized protein (697 aa).

The segment at residues 24-51 (CIRCRQKKIKCSGEKPSCQACSNNKVEC) is a DNA-binding region (zn(2)-C6 fungal-type). A helical membrane pass occupies residues 500–520 (YIMSPFVGFSILTAATIHMLL).

It localises to the nucleus membrane. This is an uncharacterized protein from Schizosaccharomyces pombe (strain 972 / ATCC 24843) (Fission yeast).